We begin with the raw amino-acid sequence, 480 residues long: MTLSFTARWRDELPATYTALLPTPLKNARLIWYNDELAQQLAIPASLFDATNGAGVWGGETLLPGMSPVAQVYSGHQFGVWAGQLGDGRGILLGEQLLADGSTLDWHLKGAGLTPYSRMGDGRAVLRSTIRESLASEAMHYLGIPTTRALSIVASDTPVQRETQETGAMLMRLAQSHMRFGHFEHFYYRREPEKVQQLADFAIHHYWPQWQDVPEKYALWFEEVAARTGRLIAEWQTVGFSHGVMNTDNMSILGLTIDYGPFGFLDDYDPGFIGNHSDHQGRYRFDNQPSVALWNLQRLAQTLTPFIEIDALNRALDRYQDALLTHYGQRMRQKLGFFTEQKDDNALLNELFSLMAREGSDYTRTFRMLSHTEQQSASSPLRDTFIDRAAFDAWFDRYRARLRTEAVDDALRQQQMQRVNPAVVLRNWLAQRAIDAAEQGDMAELHRLHEVLRQPFTDRDDDYASRPPEWGKRLEVSCSS.

G86, G88, R89, K109, D121, G122, R172, and R179 together coordinate ATP. The active-site Proton acceptor is D248. Mg(2+)-binding residues include N249 and D258. D258 contributes to the ATP binding site.

Belongs to the SELO family. The cofactor is Mg(2+). Mn(2+) serves as cofactor.

The catalysed reaction is L-seryl-[protein] + ATP = 3-O-(5'-adenylyl)-L-seryl-[protein] + diphosphate. It catalyses the reaction L-threonyl-[protein] + ATP = 3-O-(5'-adenylyl)-L-threonyl-[protein] + diphosphate. It carries out the reaction L-tyrosyl-[protein] + ATP = O-(5'-adenylyl)-L-tyrosyl-[protein] + diphosphate. The enzyme catalyses L-histidyl-[protein] + UTP = N(tele)-(5'-uridylyl)-L-histidyl-[protein] + diphosphate. The catalysed reaction is L-seryl-[protein] + UTP = O-(5'-uridylyl)-L-seryl-[protein] + diphosphate. It catalyses the reaction L-tyrosyl-[protein] + UTP = O-(5'-uridylyl)-L-tyrosyl-[protein] + diphosphate. In terms of biological role, nucleotidyltransferase involved in the post-translational modification of proteins. It can catalyze the addition of adenosine monophosphate (AMP) or uridine monophosphate (UMP) to a protein, resulting in modifications known as AMPylation and UMPylation. The protein is Protein nucleotidyltransferase YdiU of Salmonella agona (strain SL483).